A 603-amino-acid chain; its full sequence is Probable NOT transcription complex subunit VIP2 (603 aa).

2 stretches are compositionally biased toward polar residues: residues 1 to 28 (MQGT…NNLS) and 36 to 70 (NLPS…PGYS). Disordered regions lie at residues 1-70 (MQGT…PGYS), 212-242 (NDGS…LGSL), 306-335 (AGFN…GGVS), and 355-377 (SSHS…PLNS). Positions 312–335 (GTYSSNRPQQQLQHAPSVSSGGVS) are enriched in polar residues.

The protein belongs to the CNOT2/3/5 family. As to quaternary structure, binds to VIP1. Interacts with Agrobacterium tumefaciens VirE2. Forms a complex made of Agrobacterium VirE2, VIP1, VIP2 and single-stranded DNA (ssDNA).

The protein localises to the nucleus. Its function is as follows. Transcriptional regulator required for Agrobacterium-mediated stable genetic transformation by T-DNA integration in host genome, but not for T-DNA transient expression. In Nicotiana benthamiana, this protein is Probable NOT transcription complex subunit VIP2 (VIP2).